The primary structure comprises 248 residues: Aquaporin TIP2-3 (248 aa).

Transmembrane regions (helical) follow at residues 20-40 and 54-74; these read AYVA…GSAI and AGLV…VSMA. The short motif at 83 to 85 is the NPA 1 element; it reads NPA. The next 3 helical transmembrane spans lie at 97-119, 141-161, and 168-188; these read TILT…CFLL, GVVM…ATAA, and LGTI…LAAG. The NPA 2 signature appears at 196–198; the sequence is NPA. The helical transmembrane segment at 217-237 threads the bilayer; the sequence is WVGPLVGGGLAGLVYGDVFIA.

This sequence belongs to the MIP/aquaporin (TC 1.A.8) family. TIP (TC 1.A.8.10) subfamily. In terms of tissue distribution, specifically expressed in roots.

It is found in the cell membrane. In terms of biological role, water channel required to facilitate the transport of water across cell membrane. This Zea mays (Maize) protein is Aquaporin TIP2-3 (TIP2-3).